A 244-amino-acid chain; its full sequence is 5-oxoprolinase subunit A (244 aa).

This sequence belongs to the LamB/PxpA family. In terms of assembly, forms a complex composed of PxpA, PxpB and PxpC.

The catalysed reaction is 5-oxo-L-proline + ATP + 2 H2O = L-glutamate + ADP + phosphate + H(+). Functionally, catalyzes the cleavage of 5-oxoproline to form L-glutamate coupled to the hydrolysis of ATP to ADP and inorganic phosphate. The polypeptide is 5-oxoprolinase subunit A (Salmonella schwarzengrund (strain CVM19633)).